We begin with the raw amino-acid sequence, 495 residues long: Glycerol kinase (495 aa).

ADP is bound at residue T13. The ATP site is built by T13, T14, and S15. T13 provides a ligand contact to sn-glycerol 3-phosphate. Residue R17 participates in ADP binding. 4 residues coordinate sn-glycerol 3-phosphate: R83, E84, Y135, and D244. Glycerol contacts are provided by R83, E84, Y135, D244, and Q245. The ADP site is built by T266 and G309. The ATP site is built by T266, G309, Q313, and G410. ADP-binding residues include G410 and N414.

The protein belongs to the FGGY kinase family.

The catalysed reaction is glycerol + ATP = sn-glycerol 3-phosphate + ADP + H(+). Its pathway is polyol metabolism; glycerol degradation via glycerol kinase pathway; sn-glycerol 3-phosphate from glycerol: step 1/1. With respect to regulation, inhibited by fructose 1,6-bisphosphate (FBP). Its function is as follows. Key enzyme in the regulation of glycerol uptake and metabolism. Catalyzes the phosphorylation of glycerol to yield sn-glycerol 3-phosphate. This chain is Glycerol kinase, found in Shewanella sediminis (strain HAW-EB3).